Reading from the N-terminus, the 252-residue chain is MTLTLLPAVDVADGRAVRLVQGEAGSETSYGDPREAALTWQRDGAEWIHLVDLDAAFGRGSNRELIAEVVRAVDVAVELSGGIRDDASLDAALATGAARVNIGTAALEDPDWVRRAIDRVGDRIAVGLDVRGTTLSARGWTRDGGELFDVLARLDADGCARYVVTDVRRDGTLTGPNVELLRSVTAATSRPVVASGGVATLDDLTAIAVVPGVEGAIIGKALYAGAFTLPEALAVAGNIGNIGNGCAGAVGR.

Asp-10 (proton acceptor) is an active-site residue. The Proton donor role is filled by Asp-129.

The protein belongs to the HisA/HisF family.

It localises to the cytoplasm. The enzyme catalyses 1-(5-phospho-beta-D-ribosyl)-5-[(5-phospho-beta-D-ribosylamino)methylideneamino]imidazole-4-carboxamide = 5-[(5-phospho-1-deoxy-D-ribulos-1-ylimino)methylamino]-1-(5-phospho-beta-D-ribosyl)imidazole-4-carboxamide. The protein operates within amino-acid biosynthesis; L-histidine biosynthesis; L-histidine from 5-phospho-alpha-D-ribose 1-diphosphate: step 4/9. The chain is 1-(5-phosphoribosyl)-5-[(5-phosphoribosylamino)methylideneamino] imidazole-4-carboxamide isomerase from Frankia casuarinae (strain DSM 45818 / CECT 9043 / HFP020203 / CcI3).